Consider the following 515-residue polypeptide: 2,3-bisphosphoglycerate-independent phosphoglycerate mutase (515 aa).

D14 and S63 together coordinate Mn(2+). S63 is an active-site residue. Substrate contacts are provided by residues H124, 154-155 (RD), R186, R192, 259-262 (RADR), and K334. Residues D401, H405, D442, H443, and H460 each coordinate Mn(2+).

This sequence belongs to the BPG-independent phosphoglycerate mutase family. Requires Mg(2+) as cofactor. It depends on Mn(2+) as a cofactor.

It carries out the reaction (2R)-2-phosphoglycerate = (2R)-3-phosphoglycerate. It functions in the pathway carbohydrate degradation; glycolysis; pyruvate from D-glyceraldehyde 3-phosphate: step 3/5. With respect to regulation, activity is not affected by 2,3-bisphosphoglycerate. Catalyzes the interconversion of 2-phosphoglycerate and 3-phosphoglycerate. This chain is 2,3-bisphosphoglycerate-independent phosphoglycerate mutase, found in Brugia malayi (Filarial nematode worm).